Reading from the N-terminus, the 110-residue chain is Integration host factor subunit alpha (110 aa).

This sequence belongs to the bacterial histone-like protein family. In terms of assembly, heterodimer of an alpha and a beta chain.

This protein is one of the two subunits of integration host factor, a specific DNA-binding protein that functions in genetic recombination as well as in transcriptional and translational control. The polypeptide is Integration host factor subunit alpha (Delftia acidovorans (strain DSM 14801 / SPH-1)).